The sequence spans 161 residues: MHLPPLEPPISDRYFASGEVTIAADVVIAPGVLLIAEADSRIEIASGVCIGLGSVIHARGGAIIIQAGALLAAGVLIVGQSIVGRQACLGASTTLVNTSIEAGGVTAPGSLLSAETPPTTATVSSSEPAGRSPQSSAIAHPTKVYGKEQFLRMRQSMFPDR.

The disordered stretch occupies residues 111–140 (LLSAETPPTTATVSSSEPAGRSPQSSAIAH). The segment covering 116-137 (TPPTTATVSSSEPAGRSPQSSA) has biased composition (polar residues). The Encapsulation peptide signature appears at 144–161 (VYGKEQFLRMRQSMFPDR).

Belongs to the CcmN family. In terms of assembly, interacts with CcmM via the N-terminus of CcmN. Interacts with CcmK2 via the 18 C-terminal residues.

It is found in the carboxysome. Required for carboxysome formation; the N-terminus interacts with CcmM which itself binds RuBisCO (ribulose bisphosphate carboxylase, rbcL-rbcS), while the C-terminal 18 residues interact with carboxysome shell protein CcmK2. Required for growth in normal air. Functionally, beta-carboxysome assembly initiates when soluble RuBisCO is condensed into a liquid matrix in a pre-carboxysome by the RbcS-like domains of probably both CcmM58 and CcmM35. CcmN interacts with the N-terminus of CcmM58, and then recruits the CcmK2 major shell protein via CcmN's encapsulation peptide. Shell formation requires CcmK proteins and CcmO. CcmL caps the otherwise elongated carboxysome. Once fully encapsulated carboxysomes are formed, they migrate within the cell probably via interactions with the cytoskeleton. The chain is Carboxysome assembly protein CcmN from Synechococcus elongatus (strain ATCC 33912 / PCC 7942 / FACHB-805) (Anacystis nidulans R2).